We begin with the raw amino-acid sequence, 93 residues long: Sec-independent protein translocase protein TatA (93 aa).

A helical membrane pass occupies residues 1 to 21 (MGIFDWKHWIVILVVVVLVFG). The segment at 43 to 93 (MNDDEKPAEPVVPPAAQPVPPVQPQQSAPLNQPHTIDVQAQKVEEPTRKDS) is disordered. The segment covering 52–65 (PVVPPAAQPVPPVQ) has biased composition (pro residues). Over residues 84-93 (KVEEPTRKDS) the composition is skewed to basic and acidic residues.

Belongs to the TatA/E family. In terms of assembly, the Tat system comprises two distinct complexes: a TatABC complex, containing multiple copies of TatA, TatB and TatC subunits, and a separate TatA complex, containing only TatA subunits. Substrates initially bind to the TatABC complex, which probably triggers association of the separate TatA complex to form the active translocon.

Its subcellular location is the cell inner membrane. In terms of biological role, part of the twin-arginine translocation (Tat) system that transports large folded proteins containing a characteristic twin-arginine motif in their signal peptide across membranes. TatA could form the protein-conducting channel of the Tat system. This Pseudomonas fluorescens (strain ATCC BAA-477 / NRRL B-23932 / Pf-5) protein is Sec-independent protein translocase protein TatA.